Here is a 416-residue protein sequence, read N- to C-terminus: Phosphatidylserine decarboxylase proenzyme, mitochondrial (416 aa).

Residues 1–67 lie on the Mitochondrial matrix side of the membrane; the sequence is MPGKSTRPLP…GRLHFPQLAL (67 aa). The chain crosses the membrane as a helical span at residues 68 to 86; it reads RRRLGQLSCMSKPALKLRS. At 87–416 the chain is on the mitochondrial intermembrane side; that stretch reads WPLTVLYYLL…IRFGEALGSL (330 aa). Catalysis depends on charge relay system; for autoendoproteolytic cleavage activity residues aspartate 198, histidine 274, and serine 385. Serine 385 (schiff-base intermediate with substrate; via pyruvic acid; for decarboxylase activity) is an active-site residue. A Pyruvic acid (Ser); by autocatalysis modification is found at serine 385.

This sequence belongs to the phosphatidylserine decarboxylase family. PSD-B subfamily. Eukaryotic type I sub-subfamily. As to quaternary structure, heterodimer of a large membrane-associated beta subunit and a small pyruvoyl-containing alpha subunit. Pyruvate serves as cofactor. In terms of processing, is synthesized initially as an inactive proenzyme. Formation of the active enzyme involves a self-maturation process in which the active site pyruvoyl group is generated from an internal serine residue via an autocatalytic post-translational modification. Two non-identical subunits are generated from the proenzyme in this reaction, and the pyruvate is formed at the N-terminus of the alpha chain, which is derived from the carboxyl end of the proenzyme. The autoendoproteolytic cleavage occurs by a canonical serine protease mechanism, in which the side chain hydroxyl group of the serine supplies its oxygen atom to form the C-terminus of the beta chain, while the remainder of the serine residue undergoes an oxidative deamination to produce ammonia and the pyruvoyl prosthetic group on the alpha chain. During this reaction, the Ser that is part of the protease active site of the proenzyme becomes the pyruvoyl prosthetic group, which constitutes an essential element of the active site of the mature decarboxylase.

It is found in the mitochondrion inner membrane. Its subcellular location is the cytoplasm. It localises to the lipid droplet. The catalysed reaction is a 1,2-diacyl-sn-glycero-3-phospho-L-serine + H(+) = a 1,2-diacyl-sn-glycero-3-phosphoethanolamine + CO2. It functions in the pathway phospholipid metabolism; phosphatidylethanolamine biosynthesis. Functionally, catalyzes the formation of phosphatidylethanolamine (PtdEtn) from phosphatidylserine (PtdSer). Plays a central role in phospholipid metabolism and in the interorganelle trafficking of phosphatidylserine. May be involved in lipid droplet biogenesis at the endoplasmic reticulum membrane. The chain is Phosphatidylserine decarboxylase proenzyme, mitochondrial from Bos taurus (Bovine).